The chain runs to 598 residues: MKLKTPDEVPQKPGVYIMHNKEDEVIYVGKAKKLKSRLQSYFRDEDKLDRPKTQFLMRHFSYFEYILTNTEKEALILEANLIKKYRPHYNISLKDGKQYPYIKITNEDFPRIYITRNIVNDKASYYGPYTDSTHARAFIDFLNKNFQIRTCKHMDGPCLNYQIKQCSAPCVNYISQEEYNRNIRRVKLLLQGKYKTTIKKLKKDMNRYAKNMEFEKAAMLRDQIDTIKITLEKQNIQPNQDVNQDIIGFDHNNEEAAVVILSVRSGKTNKKDDLVLKGIKGFSDKQIRTEFIKQYYSTAPLPDEIILEDDIEDKDVIVEWLEEKANHKIKITVATDGHYITLIKIAKKNAHISLTENTKEEENPLLTLEKYLNLPRLPYHIEAFDISNISGIYAVASMVVFENGKPAKKMYRKFKMNTPGPNDFAMMKEVITRRYSHISPNNTNNTSDSLSIHPDLVLIDGGKGQLGMAVDVFKKLNITDVPLAGLAKKFEEVYLPGQTNPIILPRQSSALHLLQYVRDESHRFAITFHRKLRSKAFTKSILDDIPGVGKKRKQALLTHFESLDNIYNASFDEICQVKGINQKLAKTIYETLKEDKKE.

Residues 11–91 form the GIY-YIG domain; sequence QKPGVYIMHN…IKKYRPHYNI (81 aa). The 36-residue stretch at 195-230 folds into the UVR domain; that stretch reads KTTIKKLKKDMNRYAKNMEFEKAAMLRDQIDTIKIT.

The protein belongs to the UvrC family. As to quaternary structure, interacts with UvrB in an incision complex.

It localises to the cytoplasm. Its function is as follows. The UvrABC repair system catalyzes the recognition and processing of DNA lesions. UvrC both incises the 5' and 3' sides of the lesion. The N-terminal half is responsible for the 3' incision and the C-terminal half is responsible for the 5' incision. The chain is UvrABC system protein C from Methanosphaera stadtmanae (strain ATCC 43021 / DSM 3091 / JCM 11832 / MCB-3).